The following is a 260-amino-acid chain: NH(3)-dependent NAD(+) synthetase (260 aa).

31 to 38 (GLSGGLDS) serves as a coordination point for ATP. Aspartate 37 contributes to the Mg(2+) binding site. Position 112 (arginine 112) interacts with deamido-NAD(+). ATP is bound at residue threonine 132. Mg(2+) is bound at residue glutamate 137. 2 residues coordinate ATP: lysine 161 and serine 183.

This sequence belongs to the NAD synthetase family. In terms of assembly, homodimer.

The enzyme catalyses deamido-NAD(+) + NH4(+) + ATP = AMP + diphosphate + NAD(+) + H(+). The protein operates within cofactor biosynthesis; NAD(+) biosynthesis; NAD(+) from deamido-NAD(+) (ammonia route): step 1/1. Its function is as follows. Catalyzes the ATP-dependent amidation of deamido-NAD to form NAD. Uses ammonia as a nitrogen source. The chain is NH(3)-dependent NAD(+) synthetase from Helicobacter pylori (strain G27).